The sequence spans 267 residues: Trehalose-phosphate phosphatase (267 aa).

Asp-20 (nucleophile) is an active-site residue. Mg(2+) is bound by residues Asp-20, Asp-22, and Asp-198. 20-22 serves as a coordination point for substrate; it reads DLD.

This sequence belongs to the trehalose phosphatase family. Mg(2+) serves as cofactor.

The enzyme catalyses alpha,alpha-trehalose 6-phosphate + H2O = alpha,alpha-trehalose + phosphate. The protein operates within glycan biosynthesis; trehalose biosynthesis. Functionally, removes the phosphate from trehalose 6-phosphate to produce free trehalose. This chain is Trehalose-phosphate phosphatase (otsB), found in Salmonella typhimurium (strain SL1344).